The following is a 109-amino-acid chain: Glutaredoxin 4 (109 aa).

The Glutaredoxin domain occupies 4–106 (LDKIKKQISE…TLLADVAAKY (103 aa)). Lys-21 is a glutathione binding site. Residue Cys-29 coordinates [2Fe-2S] cluster. Glutathione contacts are provided by residues Arg-58, Phe-70, and 83-84 (CD).

This sequence belongs to the glutaredoxin family. Monothiol subfamily. In terms of assembly, homodimer.

Its subcellular location is the cytoplasm. In terms of biological role, monothiol glutaredoxin involved in the biogenesis of iron-sulfur clusters. This Pasteurella multocida (strain Pm70) protein is Glutaredoxin 4 (grxD).